The sequence spans 313 residues: MALLVDRVRGHWRIAAGLLFNLLVSICIVFLNKWIYVYHGFPNMSLTLVHFVVTWLGLYICQKLDIFAPKSLPPSRLLLLALSFCGFVVFTNLSLQNNTIGTYQLAKAMTTPVIIAIQTFCYQKTFSTRIQLTLIPITLGVILNSYYDVKFNFLGMVFAALGVLVTSLYQVWVGAKQHELQVNSMQLLYYQAPMSSAMLLVAVPFFEPVFGEGGIFGPWSVSALLMVLLSGVIAFMVNLSIYWIIGNTSPVTYNMFGHFKFCITLFGGYVLFKDPLSINQALGILCTLFGILAYTHFKLSEQEGSRSKLAQRP.

The next 9 helical transmembrane spans lie at 17-37 (GLLFNLLVSICIVFLNKWIYV), 40-60 (GFPNMSLTLVHFVVTWLGLYI), 77-97 (LLLLALSFCGFVVFTNLSLQN), 126-143 (FSTRIQLTLIPITLGVIL), 153-173 (FLGMVFAALGVLVTSLYQVWV), 187-206 (LLYYQAPMSSAMLLVAVPFF), 225-245 (LMVLLSGVIAFMVNLSIYWII), 252-272 (TYNMFGHFKFCITLFGGYVLF), and 275-295 (PLSINQALGILCTLFGILAYT).

This sequence belongs to the TPT transporter family. SLC35E subfamily.

It is found in the membrane. Putative transporter. This chain is Solute carrier family 35 member E3 (SLC35E3), found in Homo sapiens (Human).